The primary structure comprises 285 residues: E2F-associated phosphoprotein (285 aa).

Methionine 1 is modified (N-acetylmethionine). Residues methionine 1–valine 30 form a disordered region. Acidic residues predominate over residues glutamate 15 to valine 30. Serine 17 bears the Phosphoserine mark. Threonine 37 is modified (phosphothreonine). The segment at cysteine 48–threonine 96 is disordered. Positions serine 55–alanine 67 are enriched in acidic residues. Low complexity predominate over residues serine 81–glycine 92. 2 positions are modified to phosphoserine: serine 109 and serine 111. Residues valine 118–aspartate 144 are disordered. Basic residues predominate over residues threonine 121–lysine 130.

In terms of assembly, interacts with E2F1. The C-terminal half binds the N-terminal of E2F1. Also interacts with E2F2 and E2F3, but not E2F4. In terms of tissue distribution, ubiquitously expressed. Highest levels in heart, placenta, skeletal muscle and pancreas. Lower levels in brain, lung and kidney. In the brain, expressed in all regions with high levels in the cerebellum and cerebral cortex. Expressed in COS1 and transformed skin fibroblasts.

The protein localises to the cytoplasm. The protein resides in the nucleus. Its function is as follows. May play an important role in the fine-tuning of both major E2F1 activities, the regulation of the cell-cycle and the induction of apoptosis. Promotes S-phase entry, and inhibits p14(ARP) expression. This is E2F-associated phosphoprotein (EAPP) from Homo sapiens (Human).